A 302-amino-acid chain; its full sequence is Putative thiol protease R355 (302 aa).

Catalysis depends on residues His182 and Asp199. The active-site Nucleophile is Cys244.

It belongs to the peptidase C48 family.

The protein localises to the virion. The chain is Putative thiol protease R355 from Acanthamoeba polyphaga mimivirus (APMV).